A 739-amino-acid polypeptide reads, in one-letter code: Catalase-peroxidase (739 aa).

Positions 99 to 227 (WHSAGTYRMG…LAAVQMGLIY (129 aa)) form a cross-link, tryptophyl-tyrosyl-methioninium (Trp-Tyr) (with M-253). Histidine 100 acts as the Proton acceptor in catalysis. The segment at residues 227–253 (YVNPEGPDGNPDPVASGRDVRETFARM) is a cross-link (tryptophyl-tyrosyl-methioninium (Tyr-Met) (with W-99)). Position 268 (histidine 268) interacts with heme b.

It belongs to the peroxidase family. Peroxidase/catalase subfamily. Homodimer or homotetramer. Heme b serves as cofactor. Post-translationally, formation of the three residue Trp-Tyr-Met cross-link is important for the catalase, but not the peroxidase activity of the enzyme.

It carries out the reaction H2O2 + AH2 = A + 2 H2O. It catalyses the reaction 2 H2O2 = O2 + 2 H2O. Bifunctional enzyme with both catalase and broad-spectrum peroxidase activity. The protein is Catalase-peroxidase of Syntrophotalea carbinolica (strain DSM 2380 / NBRC 103641 / GraBd1) (Pelobacter carbinolicus).